The sequence spans 62 residues: Large ribosomal subunit protein bL28 (62 aa).

It belongs to the bacterial ribosomal protein bL28 family.

This Acetivibrio thermocellus (strain ATCC 27405 / DSM 1237 / JCM 9322 / NBRC 103400 / NCIMB 10682 / NRRL B-4536 / VPI 7372) (Clostridium thermocellum) protein is Large ribosomal subunit protein bL28.